Reading from the N-terminus, the 185-residue chain is MHDAQIRVAIAGAGGRMGRQLIQAALQMEGVALGAALEREGSSLVGSDAGELAGAGKAGVAVQSSLAAVKDDFDVLIDFTRPEGTLNHLAFCREHGKGMVIGTTGFDDAGKQAIRDAAQDIAIVFAANFSVGVNVLLKLLEKAAKVMGDYTDIEIIEAHHRHKVDAPSGTALAMGEAIAGALNKD.

Residues Gly-12–Met-17 and Glu-38 each bind NAD(+). Residue Arg-39 coordinates NADP(+). NAD(+) is bound by residues Gly-102–Thr-104 and Ala-126–Phe-129. His-159 (proton donor/acceptor) is an active-site residue. (S)-2,3,4,5-tetrahydrodipicolinate is bound at residue His-160. Catalysis depends on Lys-163, which acts as the Proton donor. A (S)-2,3,4,5-tetrahydrodipicolinate-binding site is contributed by Gly-169–Thr-170.

Belongs to the DapB family. As to quaternary structure, homotetramer.

It is found in the cytoplasm. The catalysed reaction is (S)-2,3,4,5-tetrahydrodipicolinate + NAD(+) + H2O = (2S,4S)-4-hydroxy-2,3,4,5-tetrahydrodipicolinate + NADH + H(+). It carries out the reaction (S)-2,3,4,5-tetrahydrodipicolinate + NADP(+) + H2O = (2S,4S)-4-hydroxy-2,3,4,5-tetrahydrodipicolinate + NADPH + H(+). The protein operates within amino-acid biosynthesis; L-lysine biosynthesis via DAP pathway; (S)-tetrahydrodipicolinate from L-aspartate: step 4/4. Its function is as follows. Catalyzes the conversion of 4-hydroxy-tetrahydrodipicolinate (HTPA) to tetrahydrodipicolinate. The protein is 4-hydroxy-tetrahydrodipicolinate reductase (dapB) of Klebsiella pneumoniae.